The chain runs to 245 residues: tRNA1(Val) (adenine(37)-N6)-methyltransferase (245 aa).

Belongs to the methyltransferase superfamily. tRNA (adenine-N(6)-)-methyltransferase family.

It localises to the cytoplasm. It carries out the reaction adenosine(37) in tRNA1(Val) + S-adenosyl-L-methionine = N(6)-methyladenosine(37) in tRNA1(Val) + S-adenosyl-L-homocysteine + H(+). Functionally, specifically methylates the adenine in position 37 of tRNA(1)(Val) (anticodon cmo5UAC). The polypeptide is tRNA1(Val) (adenine(37)-N6)-methyltransferase (Shigella boydii serotype 18 (strain CDC 3083-94 / BS512)).